A 428-amino-acid polypeptide reads, in one-letter code: Proteinase-activated receptor 1 (428 aa).

The first 21 residues, Met-1–Ser-21, serve as a signal peptide directing secretion. The propeptide at Ser-22 to Arg-41 is removed for receptor activation. At Ser-42–Arg-105 the chain is on the extracellular side. N-linked (GlcNAc...) asparagine glycans are attached at residues Asn-65 and Asn-78. A helical transmembrane segment spans residues Leu-106–Val-131. At Leu-132–Ala-140 the chain is on the cytoplasmic side. The chain crosses the membrane as a helical span at residues Val-141–Leu-160. At Lys-161 to Arg-179 the chain is on the extracellular side. Cys-178 and Cys-257 form a disulfide bridge. The helical transmembrane segment at Phe-180 to Ile-201 threads the bilayer. Residues Asp-202–Arg-221 lie on the Cytoplasmic side of the membrane. A helical membrane pass occupies residues Ala-222–Leu-242. The Extracellular segment spans residues Lys-243–Ser-271. N-linked (GlcNAc...) asparagine glycans are attached at residues Asn-253 and Asn-262. The helical transmembrane segment at Tyr-272 to Ile-291 threads the bilayer. Residues Cys-292 to Ala-314 are Cytoplasmic-facing. Residues Leu-315–Ile-337 traverse the membrane as a helical segment. Residues Met-338–Ala-352 lie on the Extracellular side of the membrane. The chain crosses the membrane as a helical span at residues Tyr-353–Ala-377. Residues Ser-378–Ala-428 lie on the Cytoplasmic side of the membrane. Position 421 is a phosphoserine (Ser-421).

The protein belongs to the G-protein coupled receptor 1 family. Proteolytic cleavage by thrombin generates a new N-terminus that functions as a tethered ligand. Also proteolytically cleaved by cathepsin CTSG. Post-translationally, phosphorylated in the C-terminal tail; probably mediating desensitization prior to the uncoupling and internalization of the receptor.

It localises to the cell membrane. In terms of biological role, high affinity receptor that binds the activated thrombin, leading to calcium release from intracellular stores. The thrombin-activated receptor signaling pathway is mediated through PTX-insensitive G proteins, activation of phospholipase C resulting in the production of 1D-myo-inositol 1,4,5-trisphosphate (InsP3) which binds to InsP3 receptors causing calcium release from the stores. In astrocytes, the calcium released into the cytosol allows the Ca(2+)-dependent release of L-glutamate into the synaptic cleft through BEST1, that targets the neuronal postsynaptic GRIN2A/NMDAR receptor resulting in the synaptic plasticity regulation. May play a role in platelets activation and in vascular development. Mediates up-regulation of pro-inflammatory cytokines, such as MCP-1/CCL2 and IL6, triggered by coagulation factor Xa (F10) in cardiac fibroblasts and umbilical vein endothelial cells. The chain is Proteinase-activated receptor 1 from Cricetulus longicaudatus (Long-tailed dwarf hamster).